Reading from the N-terminus, the 254-residue chain is Proteasome activator complex subunit 3 (254 aa).

A2 bears the N-acetylalanine mark. A phosphoserine mark is found at S17 and S24. Position 195 is an N6-acetyllysine; by P300/CBP (K195). Residue S247 is modified to Phosphoserine; by CHEK2.

Belongs to the PA28 family. Homoheptamer; the stability of the heptamer is essential for the specific activation of the trypsine-like subunit and inhibition of the chymotrypsin-like and postglutamyl-preferring (PGPH) subunits of the proteasome. Interacts with p53/TP53, MDM2 and MAP3K3. Associates with the proteasome. Interacts with CCAR2. Interacts with PSME3IP1 (via C-terminus); the interaction is direct and promotes the association of PSME3 with the 20S proteasome. Interacts with COIL; the interaction is inhibited by PSME3IP1. In terms of processing, phosphorylated by MAP3K3. Phosphorylation at Ser-247 promotes its association with CCAR2. Post-translationally, acetylation at the major site Lys-195 is important for oligomerization and ability to degrade its target substrates. Deacetylated by SIRT1.

It is found in the nucleus. The protein localises to the cytoplasm. In terms of biological role, subunit of the 11S REG-gamma (also called PA28-gamma) proteasome regulator, a doughnut-shaped homoheptamer which associates with the proteasome. 11S REG-gamma activates the trypsin-like catalytic subunit of the proteasome but inhibits the chymotrypsin-like and postglutamyl-preferring (PGPH) subunits. Facilitates the MDM2-p53/TP53 interaction which promotes ubiquitination- and MDM2-dependent proteasomal degradation of p53/TP53, limiting its accumulation and resulting in inhibited apoptosis after DNA damage. May also be involved in cell cycle regulation. Mediates CCAR2 and CHEK2-dependent SIRT1 inhibition. The polypeptide is Proteasome activator complex subunit 3 (PSME3) (Pongo abelii (Sumatran orangutan)).